The chain runs to 670 residues: UvrABC system protein B (670 aa).

One can recognise a Helicase ATP-binding domain in the interval 51–433; that stretch reads EGLKKREQFQ…SARIVEQIIR (383 aa). An ATP-binding site is contributed by 64–71; it reads GVTGSGKT. Residues 117–140 carry the Beta-hairpin motif; that stretch reads YYDYYQPESYLPAKDQYIEKDAQI. One can recognise a Helicase C-terminal domain in the interval 453-612; the sequence is DVMQEIRKIV…IVPKTIRKPI (160 aa). Residues 631-666 form the UVR domain; the sequence is PNVIIELDAEMREAADRLDFERAIQLRELIKKLEKE.

Belongs to the UvrB family. Forms a heterotetramer with UvrA during the search for lesions. Interacts with UvrC in an incision complex.

It localises to the cytoplasm. Its function is as follows. The UvrABC repair system catalyzes the recognition and processing of DNA lesions. A damage recognition complex composed of 2 UvrA and 2 UvrB subunits scans DNA for abnormalities. Upon binding of the UvrA(2)B(2) complex to a putative damaged site, the DNA wraps around one UvrB monomer. DNA wrap is dependent on ATP binding by UvrB and probably causes local melting of the DNA helix, facilitating insertion of UvrB beta-hairpin between the DNA strands. Then UvrB probes one DNA strand for the presence of a lesion. If a lesion is found the UvrA subunits dissociate and the UvrB-DNA preincision complex is formed. This complex is subsequently bound by UvrC and the second UvrB is released. If no lesion is found, the DNA wraps around the other UvrB subunit that will check the other stand for damage. The protein is UvrABC system protein B of Methanosarcina acetivorans (strain ATCC 35395 / DSM 2834 / JCM 12185 / C2A).